A 284-amino-acid polypeptide reads, in one-letter code: Bifunctional protein FolD (284 aa).

NADP(+)-binding positions include 165-167 (GRS) and Ser190.

Belongs to the tetrahydrofolate dehydrogenase/cyclohydrolase family. In terms of assembly, homodimer.

It catalyses the reaction (6R)-5,10-methylene-5,6,7,8-tetrahydrofolate + NADP(+) = (6R)-5,10-methenyltetrahydrofolate + NADPH. The enzyme catalyses (6R)-5,10-methenyltetrahydrofolate + H2O = (6R)-10-formyltetrahydrofolate + H(+). Its pathway is one-carbon metabolism; tetrahydrofolate interconversion. Its function is as follows. Catalyzes the oxidation of 5,10-methylenetetrahydrofolate to 5,10-methenyltetrahydrofolate and then the hydrolysis of 5,10-methenyltetrahydrofolate to 10-formyltetrahydrofolate. This chain is Bifunctional protein FolD, found in Streptococcus equi subsp. zooepidemicus (strain MGCS10565).